The primary structure comprises 449 residues: Uridine-cytidine kinase C (449 aa).

58–65 (GPSGAGKT) lines the ATP pocket. The CYTH domain maps to 235-401 (NPIYILKSVK…QKSYIELYQD (167 aa)).

This sequence belongs to the uridine kinase family.

It carries out the reaction uridine + ATP = UMP + ADP + H(+). The catalysed reaction is cytidine + ATP = CMP + ADP + H(+). Its pathway is pyrimidine metabolism; CTP biosynthesis via salvage pathway; CTP from cytidine: step 1/3. The protein operates within pyrimidine metabolism; UMP biosynthesis via salvage pathway; UMP from uridine: step 1/1. Functionally, catalyzes the conversion of uridine into uridine monophosphate and cytidine into cytidine monophosphate in the pyrimidine salvage pathway. The polypeptide is Uridine-cytidine kinase C (udkC) (Dictyostelium discoideum (Social amoeba)).